Here is a 58-residue protein sequence, read N- to C-terminus: Large ribosomal subunit protein bL32 (58 aa).

The protein belongs to the bacterial ribosomal protein bL32 family.

The chain is Large ribosomal subunit protein bL32 from Thermobifida fusca (strain YX).